A 503-amino-acid chain; its full sequence is AMP phosphorylase (503 aa).

AMP-binding positions include Gly-168, 194–199 (SRAITS), and Thr-203. The active-site Proton donor is the Asp-256. Positions 264 and 288 each coordinate AMP.

It belongs to the thymidine/pyrimidine-nucleoside phosphorylase family. Type 2 subfamily.

It catalyses the reaction AMP + phosphate = alpha-D-ribose 1,5-bisphosphate + adenine. The catalysed reaction is CMP + phosphate = cytosine + alpha-D-ribose 1,5-bisphosphate. It carries out the reaction UMP + phosphate = alpha-D-ribose 1,5-bisphosphate + uracil. Its function is as follows. Catalyzes the conversion of AMP and phosphate to adenine and ribose 1,5-bisphosphate (R15P). Exhibits phosphorylase activity toward CMP and UMP in addition to AMP. Functions in an archaeal AMP degradation pathway, together with R15P isomerase and RubisCO. This is AMP phosphorylase from Pyrococcus horikoshii (strain ATCC 700860 / DSM 12428 / JCM 9974 / NBRC 100139 / OT-3).